A 304-amino-acid chain; its full sequence is Lipoyl synthase (304 aa).

The disordered stretch occupies residues 1–21 (MAPELIQIDLEPRKPAPKPSW). Cysteine 48, cysteine 53, cysteine 59, cysteine 74, cysteine 78, cysteine 81, and serine 287 together coordinate [4Fe-4S] cluster. The Radical SAM core domain maps to 60–276 (WNHKTATFML…KEEAMKMGFR (217 aa)).

This sequence belongs to the radical SAM superfamily. Lipoyl synthase family. It depends on [4Fe-4S] cluster as a cofactor.

Its subcellular location is the cytoplasm. The catalysed reaction is [[Fe-S] cluster scaffold protein carrying a second [4Fe-4S](2+) cluster] + N(6)-octanoyl-L-lysyl-[protein] + 2 oxidized [2Fe-2S]-[ferredoxin] + 2 S-adenosyl-L-methionine + 4 H(+) = [[Fe-S] cluster scaffold protein] + N(6)-[(R)-dihydrolipoyl]-L-lysyl-[protein] + 4 Fe(3+) + 2 hydrogen sulfide + 2 5'-deoxyadenosine + 2 L-methionine + 2 reduced [2Fe-2S]-[ferredoxin]. Its pathway is protein modification; protein lipoylation via endogenous pathway; protein N(6)-(lipoyl)lysine from octanoyl-[acyl-carrier-protein]: step 2/2. In terms of biological role, catalyzes the radical-mediated insertion of two sulfur atoms into the C-6 and C-8 positions of the octanoyl moiety bound to the lipoyl domains of lipoate-dependent enzymes, thereby converting the octanoylated domains into lipoylated derivatives. The polypeptide is Lipoyl synthase (Koribacter versatilis (strain Ellin345)).